The sequence spans 299 residues: Probable inactive heme oxygenase 2, chloroplastic (299 aa).

The segment covering Met-1–Arg-15 has biased composition (low complexity). Disordered stretches follow at residues Met-1–Ser-20, Leu-45–Pro-70, and Asp-96–Trp-126. The N-terminal 83 residues, Met-1–Val-83, are a transit peptide targeting the chloroplast. Residues Cys-46–Ala-57 show a composition bias toward polar residues. The span at Ser-58–Lys-67 shows a compositional bias: basic residues. Residues Glu-105 to Lys-122 are compositionally biased toward acidic residues.

The protein belongs to the heme oxygenase family. In terms of tissue distribution, widely expressed at low levels.

It localises to the plastid. The protein localises to the chloroplast. Probable inactive heme oxygenase. Binds protoporphyrin IX, a precursor for both heme and chlorophyll biosynthesis. Plays a minor role in phytochrome assembly and photomorphogenesis. The chain is Probable inactive heme oxygenase 2, chloroplastic (HO2) from Arabidopsis thaliana (Mouse-ear cress).